The sequence spans 504 residues: MIIFREQLIALLPIIVIGITIVGIMLSIIYSRNQFKHAVLTIIGMIIASVSSLLHMMWSMNKSGQNFFQLICIDNFSVLYVILIMFVGIASSILGYVWLVYYPVYRSDEFYLLLLIASIGGILLVITNHLIVLFLGIELISISICGLISYPVFSKKSIELSIKYIILSGVSSSFLLFGIVFIYCKTGSLSFIDIKEILSTYNNVNHMLSQPSMTLIVIGLSMMMIGMGFKLSCVPFHLWISDIYQGTPTAVSMYLATGSKIAVTAVLMRFLLILPDQYNELLHIFLSVSACCSMLFGSLMAIPQISIKRMLAYSSITNAGYLLIALIALRMNNCAIIQESISVYLVSYLFANVGVWGIVNIVSTAYIQKEKNDADTIYLYHGLFWREPMLSVIFVIAILSLAGIPMTFGFIGKFYLLFIGISNQLWFLTVMMIISSIISMFYYLKIITNLFNSNFVNNTNINYDILKKWMIKPEGFMVIIVAIIILFFGVYPQFIVNLIQQFVI.

14 consecutive transmembrane segments (helical) span residues 9–29 (IALLPIIVIGITIVGIMLSII), 38–58 (AVLTIIGMIIASVSSLLHMMW), 78–98 (VLYVILIMFVGIASSILGYVW), 114–134 (LLIASIGGILLVITNHLIVLF), 135–155 (LGIELISISICGLISYPVFSK), 164–184 (YIILSGVSSSFLLFGIVFIYC), 216–236 (IVIGLSMMMIGMGFKLSCVPF), 254–274 (YLATGSKIAVTAVLMRFLLIL), 282–302 (LHIFLSVSACCSMLFGSLMAI), 309–329 (RMLAYSSITNAGYLLIALIAL), 341–361 (ISVYLVSYLFANVGVWGIVNI), 392–412 (VIFVIAILSLAGIPMTFGFIG), 425–447 (LWFLTVMMIISSIISMFYYLKII), and 476–496 (FMVIIVAIIILFFGVYPQFIV).

The protein belongs to the complex I subunit 2 family. NDH-1 is composed of 13 different subunits. Subunits NuoA, H, J, K, L, M, N constitute the membrane sector of the complex.

It is found in the cell inner membrane. The enzyme catalyses a quinone + NADH + 5 H(+)(in) = a quinol + NAD(+) + 4 H(+)(out). NDH-1 shuttles electrons from NADH, via FMN and iron-sulfur (Fe-S) centers, to quinones in the respiratory chain. The immediate electron acceptor for the enzyme in this species is believed to be ubiquinone. Couples the redox reaction to proton translocation (for every two electrons transferred, four hydrogen ions are translocated across the cytoplasmic membrane), and thus conserves the redox energy in a proton gradient. The polypeptide is NADH-quinone oxidoreductase subunit N (Blochmanniella floridana).